The primary structure comprises 256 residues: Hemolymph lipopolysaccharide-binding protein (256 aa).

The first 21 residues, 1–21 (MMNTRALLPLSVLLMATLCLC), serve as a signal peptide directing secretion. Residues 22–33 (ELPIPILQRFVR) constitute a propeptide that is removed on maturation. N56 carries an N-linked (GlcNAc...) asparagine glycan. One can recognise a C-type lectin domain in the interval 146 to 256 (IICQQEGGHL…KLPFVCEVEL (111 aa)). 2 cysteine pairs are disulfide-bonded: C148–C252 and C230–C244.

In terms of tissue distribution, hemolymph.

The protein resides in the secreted. Its function is as follows. Participates probably in the elimination of foreign substances invading the insect abdominal cavity, and in trapping intracellular symbionts, when they leak from the mycetomes into the hemolymph. The polypeptide is Hemolymph lipopolysaccharide-binding protein (Periplaneta americana (American cockroach)).